Here is a 1342-residue protein sequence, read N- to C-terminus: DNA-directed RNA polymerase subunit beta (1342 aa).

Belongs to the RNA polymerase beta chain family. As to quaternary structure, the RNAP catalytic core consists of 2 alpha, 1 beta, 1 beta' and 1 omega subunit. When a sigma factor is associated with the core the holoenzyme is formed, which can initiate transcription.

It carries out the reaction RNA(n) + a ribonucleoside 5'-triphosphate = RNA(n+1) + diphosphate. Functionally, DNA-dependent RNA polymerase catalyzes the transcription of DNA into RNA using the four ribonucleoside triphosphates as substrates. The polypeptide is DNA-directed RNA polymerase subunit beta (Yersinia pestis bv. Antiqua (strain Angola)).